We begin with the raw amino-acid sequence, 292 residues long: Bis(5'-nucleosyl)-tetraphosphatase, symmetrical (292 aa).

It belongs to the Ap4A hydrolase family.

It carries out the reaction P(1),P(4)-bis(5'-adenosyl) tetraphosphate + H2O = 2 ADP + 2 H(+). Functionally, hydrolyzes diadenosine 5',5'''-P1,P4-tetraphosphate to yield ADP. The sequence is that of Bis(5'-nucleosyl)-tetraphosphatase, symmetrical from Yersinia enterocolitica serotype O:8 / biotype 1B (strain NCTC 13174 / 8081).